The primary structure comprises 32 residues: Calcitonin (32 aa).

A disulfide bridge connects residues C1 and C7. The residue at position 32 (P32) is a Proline amide.

Belongs to the calcitonin family.

The protein resides in the secreted. Causes a rapid but short-lived drop in the level of calcium and phosphate in blood by promoting the incorporation of those ions in the bones. The protein is Calcitonin of Anguilla japonica (Japanese eel).